The following is a 452-amino-acid chain: Nuclear distribution protein nudF 2 (452 aa).

Positions 76 to 101 (ALQILDLESKVAGLQAELSSLTLTSR) form a coiled coil. WD repeat units follow at residues 123–164 (SHRD…RTLK), 166–206 (HIRA…ANIR), 210–250 (GHDH…CVKV), 253–292 (SSDA…QKSA), 295–355 (GHEN…IKTL), 357–396 (GHDN…KLVK), and 401–449 (AHSH…SCVR).

Belongs to the WD repeat LIS1/nudF family. In terms of assembly, self-associates. Interacts with nudE and dynein.

It is found in the cytoplasm. It localises to the cytoskeleton. The protein resides in the spindle pole. Positively regulates the activity of the minus-end directed microtubule motor protein dynein. May enhance dynein-mediated microtubule sliding by targeting dynein to the microtubule plus end. Required for nuclear migration during vegetative growth as well as development. Required for retrograde early endosome (EE) transport from the hyphal tip. Required for localization of dynein to the mitotic spindle poles. Recruits additional proteins to the dynein complex at SPBs. The sequence is that of Nuclear distribution protein nudF 2 from Talaromyces marneffei (strain ATCC 18224 / CBS 334.59 / QM 7333) (Penicillium marneffei).